A 253-amino-acid chain; its full sequence is Eukaryotic initiation factor 4A-6 (253 aa).

Residues 1–82 (HVVVGTPGRV…RKFMNKPVRI (82 aa)) form the Helicase ATP-binding domain. The DEAD box signature appears at 30–33 (DEAD). In terms of domain architecture, Helicase C-terminal spans 93-253 (GIKQFYVNVD…EELPANVADL (161 aa)).

It belongs to the DEAD box helicase family. eIF4A subfamily. As to quaternary structure, eIF4F is a multi-subunit complex, the composition of which varies with external and internal environmental conditions. It is composed of at least EIF4A, EIF4E and EIF4G.

The catalysed reaction is ATP + H2O = ADP + phosphate + H(+). ATP-dependent RNA helicase which is a subunit of the eIF4F complex involved in cap recognition and is required for mRNA binding to ribosome. In the current model of translation initiation, eIF4A unwinds RNA secondary structures in the 5'-UTR of mRNAs which is necessary to allow efficient binding of the small ribosomal subunit, and subsequent scanning for the initiator codon. In Nicotiana tabacum (Common tobacco), this protein is Eukaryotic initiation factor 4A-6.